A 355-amino-acid chain; its full sequence is Phosphoribosylformylglycinamidine cyclo-ligase (355 aa).

This sequence belongs to the AIR synthase family.

Its subcellular location is the cytoplasm. The catalysed reaction is 2-formamido-N(1)-(5-O-phospho-beta-D-ribosyl)acetamidine + ATP = 5-amino-1-(5-phospho-beta-D-ribosyl)imidazole + ADP + phosphate + H(+). The protein operates within purine metabolism; IMP biosynthesis via de novo pathway; 5-amino-1-(5-phospho-D-ribosyl)imidazole from N(2)-formyl-N(1)-(5-phospho-D-ribosyl)glycinamide: step 2/2. The chain is Phosphoribosylformylglycinamidine cyclo-ligase from Paraburkholderia phytofirmans (strain DSM 17436 / LMG 22146 / PsJN) (Burkholderia phytofirmans).